The following is a 251-amino-acid chain: Xylose/arabinose import ATP-binding protein XylG (251 aa).

The ABC transporter domain maps to 5-241; it reads LEIRDVHKSF…EITEVMTSFA (237 aa). Residue 37–44 participates in ATP binding; the sequence is GDNGAGKS.

The protein belongs to the ABC transporter superfamily. The complex is composed of two ATP-binding proteins (XylG), two transmembrane proteins (XylH) and a solute-binding protein (XylF).

Its subcellular location is the cell membrane. It carries out the reaction D-xylose(out) + ATP + H2O = D-xylose(in) + ADP + phosphate + H(+). The enzyme catalyses L-arabinose(out) + ATP + H2O = L-arabinose(in) + ADP + phosphate + H(+). Part of the ABC transporter complex XylFGH involved in the uptake of xylose and arabinose. Responsible for energy coupling to the transport system. The chain is Xylose/arabinose import ATP-binding protein XylG from Sulfolobus acidocaldarius (strain ATCC 33909 / DSM 639 / JCM 8929 / NBRC 15157 / NCIMB 11770).